A 59-amino-acid chain; its full sequence is Large ribosomal subunit protein bL32 (59 aa).

Over residues 1–15 (MANPKRKQSKRRSAN) the composition is skewed to basic residues. Residues 1–48 (MANPKRKQSKRRSANRRAANAFIAPEFAKDPTDGSAFRPHRVNPKNGM) are disordered.

Belongs to the bacterial ribosomal protein bL32 family.

This is Large ribosomal subunit protein bL32 from Opitutus terrae (strain DSM 11246 / JCM 15787 / PB90-1).